The sequence spans 723 residues: LPS-assembly protein LptD (723 aa).

The signal sequence occupies residues 1 to 23; that stretch reads MNTLKLCLILYACLVLLPVRVMS.

It belongs to the LptD family. As to quaternary structure, component of the lipopolysaccharide transport and assembly complex. Interacts with LptE and LptA.

The protein resides in the cell outer membrane. Its function is as follows. Together with LptE, is involved in the assembly of lipopolysaccharide (LPS) at the surface of the outer membrane. This chain is LPS-assembly protein LptD, found in Nitrosomonas europaea (strain ATCC 19718 / CIP 103999 / KCTC 2705 / NBRC 14298).